Consider the following 342-residue polypeptide: Platelet-activating factor receptor (342 aa).

Residues Met1–Thr16 lie on the Extracellular side of the membrane. A glycan (N-linked (GlcNAc...) asparagine) is linked at Asn4. A helical transmembrane segment spans residues Leu17–Trp38. Over Val39–Ile54 the chain is Cytoplasmic. Residues Phe55–Ile74 form a helical membrane-spanning segment. The Extracellular segment spans residues Val75–Asn91. An intrachain disulfide couples Cys90 to Cys173. A helical transmembrane segment spans residues Leu92 to Tyr113. The Cytoplasmic portion of the chain corresponds to Asn114 to Arg133. Residues Gly134–Leu155 form a helical membrane-spanning segment. The Extracellular segment spans residues Asp156–Val184. N-linked (GlcNAc...) asparagine glycans are attached at residues Asn163 and Asn169. The chain crosses the membrane as a helical span at residues Leu185–Cys205. At Asn206 to Met233 the chain is on the cytoplasmic side. Residues Val234 to Pro254 form a helical membrane-spanning segment. Residues Trp255–Gln276 lie on the Extracellular side of the membrane. A helical transmembrane segment spans residues Val277–Leu296. At Thr297 to Tyr342 the chain is on the cytoplasmic side.

It belongs to the G-protein coupled receptor 1 family. Interacts with ARRB1. Found in oviductal epithelial and stroma cells. Levels in the oviduct are raised at days 2-4 of both pregnancy and of the estrus cycle. In the endometrium, localization is predominantly to the apical borders of glandular and luminal epithelial cells. Expressed at lower levels in endometrial stromal cells. Levels in the endometrium are increased at day 20 of pregnancy (at protein level).

The protein localises to the cell membrane. Functionally, receptor for platelet activating factor, a chemotactic phospholipid mediator that possesses potent inflammatory, smooth-muscle contractile and hypotensive activity. Seems to mediate its action via a G protein that activates a phosphatidylinositol-calcium second messenger system. May be involved in the morphological and physical modifications of the oviduct and uterus during the estrus cycle and early pregnancy. The sequence is that of Platelet-activating factor receptor from Bos taurus (Bovine).